A 350-amino-acid polypeptide reads, in one-letter code: Anthranilate phosphoribosyltransferase (350 aa).

5-phospho-alpha-D-ribose 1-diphosphate-binding positions include Gly-94, 97 to 98 (GD), Thr-102, 104 to 107 (NVST), 122 to 130 (KHGNRSVSS), and Ser-134. Gly-94 provides a ligand contact to anthranilate. Residue Ser-106 participates in Mg(2+) binding. Anthranilate is bound at residue Asn-125. Residue Arg-180 participates in anthranilate binding. Mg(2+) is bound by residues Asp-239 and Glu-240.

It belongs to the anthranilate phosphoribosyltransferase family. As to quaternary structure, homodimer. The cofactor is Mg(2+).

The catalysed reaction is N-(5-phospho-beta-D-ribosyl)anthranilate + diphosphate = 5-phospho-alpha-D-ribose 1-diphosphate + anthranilate. It functions in the pathway amino-acid biosynthesis; L-tryptophan biosynthesis; L-tryptophan from chorismate: step 2/5. Functionally, catalyzes the transfer of the phosphoribosyl group of 5-phosphorylribose-1-pyrophosphate (PRPP) to anthranilate to yield N-(5'-phosphoribosyl)-anthranilate (PRA). The polypeptide is Anthranilate phosphoribosyltransferase (Pelobacter propionicus (strain DSM 2379 / NBRC 103807 / OttBd1)).